Reading from the N-terminus, the 22-residue chain is uncharacterized protein (22 aa).

The tract at residues methionine 1 to glycine 22 is disordered.

This is an uncharacterized protein from Lactobacillus helveticus (Lactobacillus suntoryeus).